The sequence spans 989 residues: Translation initiation factor IF-2 (989 aa).

2 disordered regions span residues 43-219 and 234-379; these read KRRR…LQAR and EARR…GGAR. Over residues 72–87 the composition is skewed to polar residues; it reads NTPNKDTAVTQTATKN. Over residues 105–146 the composition is skewed to low complexity; sequence PKPVAAEATAQETSKAAPAAAQPVAEKEAAAPASAEAAKSAA. Residues 149–159 are compositionally biased toward basic and acidic residues; that stretch reads VTDRGAKKTTE. Over residues 160–171 the composition is skewed to polar residues; it reads KNGANASGNRPS. Positions 234-293 are enriched in basic and acidic residues; it reads EARRREDRLKQEADLEEQRRIEEKRRLEAEAKVEAEKQAALKEKEKAEAKARAKAEKEAK. Residues 294-303 show a composition bias toward low complexity; that stretch reads AAQAKTAGAA. The span at 342–361 shows a compositional bias: basic and acidic residues; it reads PRREAPRPAMRDRKGEDRRQ. The tr-type G domain maps to 489-659; sequence SRPPVVTIMG…LLQAEMLELK (171 aa). The G1 stretch occupies residues 498–505; sequence GHVDHGKT. 498 to 505 serves as a coordination point for GTP; the sequence is GHVDHGKT. A G2 region spans residues 523–527; the sequence is GITQH. The segment at 545–548 is G3; the sequence is DTPG. GTP-binding positions include 545–549 and 599–602; these read DTPGH and NKMD. Positions 599–602 are G4; that stretch reads NKMD. Positions 635–637 are G5; sequence SAA.

The protein belongs to the TRAFAC class translation factor GTPase superfamily. Classic translation factor GTPase family. IF-2 subfamily.

It localises to the cytoplasm. One of the essential components for the initiation of protein synthesis. Protects formylmethionyl-tRNA from spontaneous hydrolysis and promotes its binding to the 30S ribosomal subunits. Also involved in the hydrolysis of GTP during the formation of the 70S ribosomal complex. This is Translation initiation factor IF-2 from Zymomonas mobilis subsp. mobilis (strain ATCC 31821 / ZM4 / CP4).